Reading from the N-terminus, the 155-residue chain is Interleukin-2 (155 aa).

Positions 1-20 (MYKIQLLSCIALTLALVANG) are cleaved as a signal peptide. O-linked (GalNAc...) threonine glycosylation occurs at Thr-23. The cysteines at positions 79 and 127 are disulfide-linked.

It belongs to the IL-2 family.

The protein localises to the secreted. Its function is as follows. Cytokine produced by activated CD4-positive helper T-cells and to a lesser extend activated CD8-positive T-cells and natural killer (NK) cells that plays pivotal roles in the immune response and tolerance. Binds to a receptor complex composed of either the high-affinity trimeric IL-2R (IL2RA/CD25, IL2RB/CD122 and IL2RG/CD132) or the low-affinity dimeric IL-2R (IL2RB and IL2RG). Interaction with the receptor leads to oligomerization and conformation changes in the IL-2R subunits resulting in downstream signaling starting with phosphorylation of JAK1 and JAK3. In turn, JAK1 and JAK3 phosphorylate the receptor to form a docking site leading to the phosphorylation of several substrates including STAT5. This process leads to activation of several pathways including STAT, phosphoinositide-3-kinase/PI3K and mitogen-activated protein kinase/MAPK pathways. Functions as a T-cell growth factor and can increase NK-cell cytolytic activity as well. Promotes strong proliferation of activated B-cells and subsequently immunoglobulin production. Plays a pivotal role in regulating the adaptive immune system by controlling the survival and proliferation of regulatory T-cells, which are required for the maintenance of immune tolerance. Moreover, participates in the differentiation and homeostasis of effector T-cell subsets, including Th1, Th2, Th17 as well as memory CD8-positive T-cells. This Bubalus bubalis (Domestic water buffalo) protein is Interleukin-2 (IL2).